The primary structure comprises 400 residues: Phosphoglycerate kinase (400 aa).

Substrate-binding positions include 21-23 (DLN), Arg36, 59-62 (HLGR), Arg116, and Arg149. Residues Lys200, Glu317, and 343–346 (GGDT) each bind ATP.

This sequence belongs to the phosphoglycerate kinase family. Monomer.

The protein localises to the cytoplasm. The enzyme catalyses (2R)-3-phosphoglycerate + ATP = (2R)-3-phospho-glyceroyl phosphate + ADP. It functions in the pathway carbohydrate degradation; glycolysis; pyruvate from D-glyceraldehyde 3-phosphate: step 2/5. The polypeptide is Phosphoglycerate kinase (Blochmanniella floridana).